The chain runs to 135 residues: Large ribosomal subunit protein eL32 (135 aa).

The protein belongs to the eukaryotic ribosomal protein eL32 family.

The polypeptide is Large ribosomal subunit protein eL32 (Methanococcus maripaludis (strain C5 / ATCC BAA-1333)).